The following is a 215-amino-acid chain: 3-demethoxyubiquinol 3-hydroxylase (215 aa).

Residues E64, E94, H97, E146, E178, and H181 each coordinate Fe cation.

Belongs to the COQ7 family. Requires Fe cation as cofactor.

It localises to the cell membrane. It catalyses the reaction a 5-methoxy-2-methyl-3-(all-trans-polyprenyl)benzene-1,4-diol + AH2 + O2 = a 3-demethylubiquinol + A + H2O. Its pathway is cofactor biosynthesis; ubiquinone biosynthesis. Its function is as follows. Catalyzes the hydroxylation of 2-nonaprenyl-3-methyl-6-methoxy-1,4-benzoquinol during ubiquinone biosynthesis. This Ectopseudomonas mendocina (strain ymp) (Pseudomonas mendocina) protein is 3-demethoxyubiquinol 3-hydroxylase.